The following is a 188-amino-acid chain: Achaete-scute homolog 5 (188 aa).

A basic motif region spans residues 80–93; sequence AFIQKRNERERQRV. In terms of domain architecture, bHLH spans 80 to 132; it reads AFIQKRNERERQRVKCVNEGYARLRGHLPGALTEKRLSKVETLRAAIRYIKYL. The interval 94–132 is helix-loop-helix motif; the sequence is KCVNEGYARLRGHLPGALTEKRLSKVETLRAAIRYIKYL. Residues 139-188 form a disordered region; sequence TPDGAPPPATSPPPAHTGHSNVPQPSSLVAESSGSPFSSSPFLESEEPSL. Positions 142-153 are enriched in pro residues; it reads GAPPPATSPPPA. Residues 158-168 show a composition bias toward polar residues; the sequence is SNVPQPSSLVA. Residues 169 to 181 show a composition bias toward low complexity; it reads ESSGSPFSSSPFL.

As to quaternary structure, interacts with transcription factor TCF3/E12. Expressed in teeth (at protein level).

The protein localises to the nucleus. In terms of biological role, transcription factor. Probably binds E-box motifs 5'-CANNTG-3' in complex with transcription factor TCF3/E12. Negatively modulates transcription of target genes such as CDH1/E-cadherin, perhaps by recruiting the PRC2 repressive complex to regulatory elements. Regulates ameloblast development and tooth germ growth, perhaps acting by positively modulating migration of inner enamel epithelium (IEE) cells. Plays a role in enamel formation. In Mus musculus (Mouse), this protein is Achaete-scute homolog 5.